Here is a 494-residue protein sequence, read N- to C-terminus: Cobyric acid synthase (494 aa).

Positions 248-445 constitute a GATase cobBQ-type domain; that stretch reads ELEIAVLKLP…LHGIFDNGPW (198 aa). Cys329 (nucleophile) is an active-site residue. His437 is an active-site residue.

It belongs to the CobB/CobQ family. CobQ subfamily.

It functions in the pathway cofactor biosynthesis; adenosylcobalamin biosynthesis. Catalyzes amidations at positions B, D, E, and G on adenosylcobyrinic A,C-diamide. NH(2) groups are provided by glutamine, and one molecule of ATP is hydrogenolyzed for each amidation. This Synechococcus sp. (strain WH7803) protein is Cobyric acid synthase.